A 179-amino-acid polypeptide reads, in one-letter code: Large ribosomal subunit protein uL5 (179 aa).

The protein belongs to the universal ribosomal protein uL5 family. Part of the 50S ribosomal subunit; part of the 5S rRNA/L5/L18/L25 subcomplex. Contacts the 5S rRNA and the P site tRNA. Forms a bridge to the 30S subunit in the 70S ribosome.

In terms of biological role, this is one of the proteins that bind and probably mediate the attachment of the 5S RNA into the large ribosomal subunit, where it forms part of the central protuberance. In the 70S ribosome it contacts protein S13 of the 30S subunit (bridge B1b), connecting the 2 subunits; this bridge is implicated in subunit movement. Contacts the P site tRNA; the 5S rRNA and some of its associated proteins might help stabilize positioning of ribosome-bound tRNAs. This Vibrio atlanticus (strain LGP32) (Vibrio splendidus (strain Mel32)) protein is Large ribosomal subunit protein uL5.